Reading from the N-terminus, the 369-residue chain is 2-aminoethylphosphonate--pyruvate transaminase (369 aa).

An N6-(pyridoxal phosphate)lysine modification is found at Lys-193.

The protein belongs to the class-V pyridoxal-phosphate-dependent aminotransferase family. PhnW subfamily. Homodimer. Requires pyridoxal 5'-phosphate as cofactor.

The catalysed reaction is (2-aminoethyl)phosphonate + pyruvate = phosphonoacetaldehyde + L-alanine. In terms of biological role, involved in phosphonate degradation. In Burkholderia mallei (strain NCTC 10247), this protein is 2-aminoethylphosphonate--pyruvate transaminase.